The following is a 231-amino-acid chain: MTRTTTCVYHFLVWNWYIFLNYYIPLIGKDDEKLKEFHDGGRSKYLTLLNLLLQAIFFGVACLDDVLKRIIGRKDIKFITSTRDLLFSTLVFPISTFIFLVFWTLFYYDRSLIYPKGLDDYFPAWLNHAMHTYILLFVLVETILRPHHYPSKKLGLALLGACNLAYITRVLWRYSQTGNWVYPVFASLNPLGIIIFFLVCYILNASIYLVGEKINHWKWGATVKPLMKKKK.

Topologically, residues 1 to 7 (MTRTTTC) are cytoplasmic. The helical transmembrane segment at 8–28 (VYHFLVWNWYIFLNYYIPLIG) threads the bilayer. Over 29 to 45 (KDDEKLKEFHDGGRSKY) the chain is Extracellular. The helical transmembrane segment at 46-66 (LTLLNLLLQAIFFGVACLDDV) threads the bilayer. Residues 67–85 (LKRIIGRKDIKFITSTRDL) are Cytoplasmic-facing. A helical transmembrane segment spans residues 86–106 (LFSTLVFPISTFIFLVFWTLF). The Extracellular portion of the chain corresponds to 107-123 (YYDRSLIYPKGLDDYFP). A helical transmembrane segment spans residues 124–144 (AWLNHAMHTYILLFVLVETIL). Residues 145 to 154 (RPHHYPSKKL) are Cytoplasmic-facing. Residues 155–172 (GLALLGACNLAYITRVLW) traverse the membrane as a helical segment. The Extracellular portion of the chain corresponds to 173–190 (RYSQTGNWVYPVFASLNP). A helical transmembrane segment spans residues 191 to 211 (LGIIIFFLVCYILNASIYLVG). Topologically, residues 212–231 (EKINHWKWGATVKPLMKKKK) are cytoplasmic.

Belongs to the AIG1 family. Highly expressed in flank organs and weakly in testis and earlobes.

Its subcellular location is the cell membrane. The enzyme catalyses 9-hexadecanoyloxy-octadecanoate + H2O = 9-hydroxy-octadecanoate + hexadecanoate + H(+). It carries out the reaction 12-hexadecanoyloxy-octadecanoate + H2O = 12-hydroxyoctadecanoate + hexadecanoate + H(+). It catalyses the reaction 9-(9Z-hexadecenoyloxy)-octadecanoate + H2O = (9Z)-hexadecenoate + 9-hydroxy-octadecanoate + H(+). The catalysed reaction is 12-(9Z-hexadecenoyloxy)-octadecanoate + H2O = 12-hydroxyoctadecanoate + (9Z)-hexadecenoate + H(+). The enzyme catalyses 13-(9Z-hexadecenoyloxy)-octadecanoate + H2O = 13-hydroxy-octadecanoate + (9Z)-hexadecenoate + H(+). It carries out the reaction 9-octadecanoyloxy-octadecanoate + H2O = 9-hydroxy-octadecanoate + octadecanoate + H(+). It catalyses the reaction 12-octadecanoyloxy-octadecanoate + H2O = 12-hydroxyoctadecanoate + octadecanoate + H(+). The catalysed reaction is 13-octadecanoyloxy-octadecanoate + H2O = 13-hydroxy-octadecanoate + octadecanoate + H(+). The enzyme catalyses 9-(9Z-octadecenoyloxy)-octadecanoate + H2O = 9-hydroxy-octadecanoate + (9Z)-octadecenoate + H(+). It carries out the reaction 12-(9Z-octadecenoyloxy)-octadecanoate + H2O = 12-hydroxyoctadecanoate + (9Z)-octadecenoate + H(+). It catalyses the reaction 13-(9Z-octadecenoyloxy)-octadecanoate + H2O = 13-hydroxy-octadecanoate + (9Z)-octadecenoate + H(+). The catalysed reaction is 5-(9Z-octadecenoyloxy)-octadecanoate + H2O = 5-hydroxy-octadecanoate + (9Z)-octadecenoate + H(+). Functionally, hydrolyzes bioactive fatty-acid esters of hydroxy-fatty acids (FAHFAs), but not other major classes of lipids. Shows a preference for FAHFAs with branching distal from the carboxylate head group of the lipids. Regulates the expression and the cell-associated anticoagulant activity of the inhibitor TFPI in endothelial cells (in vitro). The chain is Androgen-dependent TFPI-regulating protein (ADTRP) from Mesocricetus auratus (Golden hamster).